We begin with the raw amino-acid sequence, 311 residues long: Aspartate carbamoyltransferase catalytic subunit (311 aa).

Carbamoyl phosphate-binding residues include arginine 55 and threonine 56. Lysine 85 provides a ligand contact to L-aspartate. Carbamoyl phosphate contacts are provided by arginine 106, histidine 135, and glutamine 138. L-aspartate is bound by residues arginine 168 and arginine 230. Leucine 268 and proline 269 together coordinate carbamoyl phosphate.

The protein belongs to the aspartate/ornithine carbamoyltransferase superfamily. ATCase family. Heterododecamer (2C3:3R2) of six catalytic PyrB chains organized as two trimers (C3), and six regulatory PyrI chains organized as three dimers (R2).

It catalyses the reaction carbamoyl phosphate + L-aspartate = N-carbamoyl-L-aspartate + phosphate + H(+). It functions in the pathway pyrimidine metabolism; UMP biosynthesis via de novo pathway; (S)-dihydroorotate from bicarbonate: step 2/3. Catalyzes the condensation of carbamoyl phosphate and aspartate to form carbamoyl aspartate and inorganic phosphate, the committed step in the de novo pyrimidine nucleotide biosynthesis pathway. The sequence is that of Aspartate carbamoyltransferase catalytic subunit from Escherichia coli O139:H28 (strain E24377A / ETEC).